Reading from the N-terminus, the 753-residue chain is Ribosome biogenesis protein BOP1 homolog (753 aa).

The disordered stretch occupies residues 1–155 (MTKRSKGANE…RNTVGNVPLK (155 aa)). 2 stretches are compositionally biased toward basic and acidic residues: residues 7–18 (GANEDKLIETKS) and 30–41 (KPVEAESLKEED). 2 stretches are compositionally biased toward acidic residues: residues 64–75 (DDFDSDFSDSED) and 83–109 (EDGD…DDDG). Over residues 110–121 (SEHVGSDNNEEH) the composition is skewed to basic and acidic residues. Over residues 122-142 (GSDEDSERGEAVEESDSSEDE) the composition is skewed to acidic residues. WD repeat units lie at residues 421-462 (GHTG…KVWQ), 464-502 (DEAI…DEEQ), 539-581 (RHFK…TQRL), 626-665 (TGLR…KPYK), 669-708 (NHPK…DLNQ), and 722-753 (SSKG…LYCH).

This sequence belongs to the WD repeat BOP1/ERB1 family. Interacts with PES. Interacts with WDR12.

The protein resides in the nucleus. It is found in the nucleolus. The protein localises to the nucleoplasm. Its function is as follows. Required for maturation of ribosomal RNAs and formation of the large ribosomal subunit. Plays an essential role in cell growth and survival through its regulation of ribosome biogenesis and mitotic progression. The sequence is that of Ribosome biogenesis protein BOP1 homolog from Arabidopsis thaliana (Mouse-ear cress).